A 203-amino-acid polypeptide reads, in one-letter code: Secreted RxLR effector protein RXLR-C28 (203 aa).

A signal peptide spans 1-24; it reads MKAVKLTAAVVVLFMAPYVPITSS. An N-linked (GlcNAc...) asparagine glycan is attached at Asn-32. A RxLR motif is present at residues 37–40; it reads RHLR. Asn-193 carries an N-linked (GlcNAc...) asparagine glycan.

The protein belongs to the RxLR effector family.

The protein localises to the secreted. It is found in the host cytoplasm. Functionally, secreted effector that does not suppress pattern-triggered immunity (PTI) in plant host. The chain is Secreted RxLR effector protein RXLR-C28 from Plasmopara halstedii (Downy mildew of sunflower).